We begin with the raw amino-acid sequence, 284 residues long: Cell division protein DivIB (284 aa).

The tract at residues 1-21 is disordered; sequence MFGKRKDSKNKAMRDNEELTP. At 1–63 the chain is on the cytoplasmic side; that stretch reads MFGKRKDSKN…GLRKRRLQKR (63 aa). The helical transmembrane segment at 64-84 threads the bilayer; it reads VITLASIFGISAIISLYAILP. The Extracellular portion of the chain corresponds to 85-284; the sequence is VSRVSNIEIE…VGAYAYPYBK (200 aa). Positions 86-156 constitute a POTRA domain; sequence SRVSNIEIEG…NVVKFKVTEY (71 aa).

Belongs to the FtsQ/DivIB family. DivIB subfamily.

Its subcellular location is the cell membrane. Cell division protein that may be involved in stabilizing or promoting the assembly of the division complex. The chain is Cell division protein DivIB from Ligilactobacillus salivarius (strain CECT 5713) (Lactobacillus salivarius).